A 126-amino-acid chain; its full sequence is Late histone H2A.L3 (126 aa).

The tract at residues M1–A20 is disordered. At S2 the chain carries N-acetylserine. Position 2 is a phosphoserine (S2). Basic residues predominate over residues G7–S19. Q105 is subject to N5-methylglutamine. K120 is covalently cross-linked (Glycyl lysine isopeptide (Lys-Gly) (interchain with G-Cter in ubiquitin)).

This sequence belongs to the histone H2A family. In terms of assembly, the nucleosome is a histone octamer containing two molecules each of H2A, H2B, H3 and H4 assembled in one H3-H4 heterotetramer and two H2A-H2B heterodimers. The octamer wraps approximately 147 bp of DNA. In terms of processing, monoubiquitination of Lys-120 gives a specific tag for epigenetic transcriptional repression. Phosphorylation of Ser-2 directly represses transcription.

It localises to the nucleus. It is found in the chromosome. Core component of nucleosome. Nucleosomes wrap and compact DNA into chromatin, limiting DNA accessibility to the cellular machineries which require DNA as a template. Histones thereby play a central role in transcription regulation, DNA repair, DNA replication and chromosomal stability. DNA accessibility is regulated via a complex set of post-translational modifications of histones, also called histone code, and nucleosome remodeling. The sequence is that of Late histone H2A.L3 from Strongylocentrotus purpuratus (Purple sea urchin).